Reading from the N-terminus, the 168-residue chain is Small ribosomal subunit protein uS5 (168 aa).

One can recognise an S5 DRBM domain in the interval 13 to 76; sequence LKEQVVDIKR…EDAKKNLIHV (64 aa).

The protein belongs to the universal ribosomal protein uS5 family. Part of the 30S ribosomal subunit. Contacts proteins S4 and S8.

Functionally, with S4 and S12 plays an important role in translational accuracy. Located at the back of the 30S subunit body where it stabilizes the conformation of the head with respect to the body. The protein is Small ribosomal subunit protein uS5 of Alkaliphilus oremlandii (strain OhILAs) (Clostridium oremlandii (strain OhILAs)).